The following is a 1212-amino-acid chain: Dermatan-sulfate epimerase-like protein (1212 aa).

An N-terminal signal peptide occupies residues M1–S20. 4 N-linked (GlcNAc...) asparagine glycosylation sites follow: N28, N666, N688, and N709. 2 consecutive transmembrane segments (helical) span residues I764–L784 and W803–C823. An N-linked (GlcNAc...) asparagine glycan is attached at N874.

This sequence belongs to the dermatan-sulfate isomerase family. In terms of tissue distribution, expressed in different brain areas as well as in multiple other peripheral tissues.

It is found in the membrane. This chain is Dermatan-sulfate epimerase-like protein (DSEL), found in Homo sapiens (Human).